Reading from the N-terminus, the 385-residue chain is MHAWDPPASLSRALPLASSVLMLLLSCLWLLGAGPSLRLAPELLTEPWQVHRLLTHALGHTALPGLLLSLLLLPTLGWWQECHLGTLRFLHNSAVLALATGLLAVLLAGLGLSSAAGGCGYMPVHLAMLAGQSYYPGWPQRTLPPWLLPWLLLALTLLLSSEPPFLQLLCGLLAGLAYAAGAFRWLELSERRLQVLQEGVLCRTLAGCWPLKLLPTPGSLGELPVTYPAGVRPATPRPPYLASSSSWPHTDGFAQLPPGLGPGQLTWKNSERDLDWAGPSFASATPMWAALDEQMLQEGIQASLLDVSVQGSQNTLWSPKPSVSSLRLQQLQHMGFPTEQAAVALAATGRVEGAVSLLVEGLVDTEALVTEERSGPAHCKDTGVS.

Helical transmembrane passes span 13–33 (ALPL…LLGA), 58–78 (LGHT…TLGW), 93–113 (SAVL…LGLS), 146–166 (WLLP…PPFL), and 168–188 (LLCG…WLEL). The UBA domain maps to 322-361 (SVSSLRLQQLQHMGFPTEQAAVALAATGRVEGAVSLLVEG).

The protein localises to the membrane. In Rattus norvegicus (Rat), this protein is Rhomboid domain-containing protein 3 (Rhbdd3).